Here is a 143-residue protein sequence, read N- to C-terminus: Nucleoside diphosphate kinase (143 aa).

Positions 11, 59, 87, 93, 104, and 114 each coordinate ATP. Residue His-117 is the Pros-phosphohistidine intermediate of the active site.

It belongs to the NDK family. In terms of assembly, homotetramer. It depends on Mg(2+) as a cofactor.

It localises to the cytoplasm. It catalyses the reaction a 2'-deoxyribonucleoside 5'-diphosphate + ATP = a 2'-deoxyribonucleoside 5'-triphosphate + ADP. The catalysed reaction is a ribonucleoside 5'-diphosphate + ATP = a ribonucleoside 5'-triphosphate + ADP. Major role in the synthesis of nucleoside triphosphates other than ATP. The ATP gamma phosphate is transferred to the NDP beta phosphate via a ping-pong mechanism, using a phosphorylated active-site intermediate. In Shewanella denitrificans (strain OS217 / ATCC BAA-1090 / DSM 15013), this protein is Nucleoside diphosphate kinase.